Consider the following 229-residue polypeptide: Large ribosomal subunit protein uL1 (229 aa).

It belongs to the universal ribosomal protein uL1 family. As to quaternary structure, part of the 50S ribosomal subunit.

In terms of biological role, binds directly to 23S rRNA. The L1 stalk is quite mobile in the ribosome, and is involved in E site tRNA release. Protein L1 is also a translational repressor protein, it controls the translation of the L11 operon by binding to its mRNA. This Latilactobacillus sakei subsp. sakei (strain 23K) (Lactobacillus sakei subsp. sakei) protein is Large ribosomal subunit protein uL1.